Here is a 1016-residue protein sequence, read N- to C-terminus: Protein kinase C-like 2 (1016 aa).

Positions M1–G68 constitute an REM-1 1 domain. Residues G68 to S101 form a disordered region. Residues S86–S101 are compositionally biased toward low complexity. One can recognise an REM-1 2 domain in the interval N111–E188. Residues P195 to E307 form the C2 domain. 2 Phorbol-ester/DAG-type zinc fingers span residues G405–C453 and P473–C523. Residues Y543–A602 are disordered. Residues Q546–S568 are compositionally biased toward basic residues. The segment covering S579–P590 has biased composition (low complexity). The region spanning F683–F942 is the Protein kinase domain. Residues L689–V697 and K712 contribute to the ATP site. Residue D808 is the Proton acceptor of the active site. An AGC-kinase C-terminal domain is found at S943–T1013. Phosphothreonine is present on T984.

This sequence belongs to the protein kinase superfamily. AGC Ser/Thr protein kinase family. PKC subfamily. As to quaternary structure, interacts with rho2.

It catalyses the reaction L-seryl-[protein] + ATP = O-phospho-L-seryl-[protein] + ADP + H(+). The catalysed reaction is L-threonyl-[protein] + ATP = O-phospho-L-threonyl-[protein] + ADP + H(+). In terms of biological role, involved in the control of the cell shape. Target of the inhibitor staurosporine. This is Protein kinase C-like 2 (pck2) from Schizosaccharomyces pombe (strain 972 / ATCC 24843) (Fission yeast).